A 193-amino-acid polypeptide reads, in one-letter code: NAD(P)H-quinone oxidoreductase subunit J (193 aa).

The disordered stretch occupies residues 1–21 (MSDSAPTNPTPTNPAPEESAS).

It belongs to the complex I 30 kDa subunit family. NDH-1 can be composed of about 15 different subunits; different subcomplexes with different compositions have been identified which probably have different functions.

The protein resides in the cellular thylakoid membrane. It carries out the reaction a plastoquinone + NADH + (n+1) H(+)(in) = a plastoquinol + NAD(+) + n H(+)(out). The enzyme catalyses a plastoquinone + NADPH + (n+1) H(+)(in) = a plastoquinol + NADP(+) + n H(+)(out). Functionally, NDH-1 shuttles electrons from an unknown electron donor, via FMN and iron-sulfur (Fe-S) centers, to quinones in the respiratory and/or the photosynthetic chain. The immediate electron acceptor for the enzyme in this species is believed to be plastoquinone. Couples the redox reaction to proton translocation, and thus conserves the redox energy in a proton gradient. Cyanobacterial NDH-1 also plays a role in inorganic carbon-concentration. The protein is NAD(P)H-quinone oxidoreductase subunit J of Synechococcus sp. (strain CC9902).